The sequence spans 189 residues: Thymidine kinase (189 aa).

ATP contacts are provided by residues 9-16 (GTMNSGKT) and 85-88 (DESQ). Glu-86 functions as the Proton acceptor in the catalytic mechanism. Zn(2+)-binding residues include Cys-143, Cys-146, Cys-180, and His-183.

It belongs to the thymidine kinase family. As to quaternary structure, homotetramer.

The protein resides in the cytoplasm. It carries out the reaction thymidine + ATP = dTMP + ADP + H(+). The protein is Thymidine kinase of Streptococcus pyogenes serotype M6 (strain ATCC BAA-946 / MGAS10394).